Here is a 243-residue protein sequence, read N- to C-terminus: 2-O-methyltransferase NoeI (243 aa).

The protein belongs to the FkbM methyltransferase family.

It localises to the cytoplasm. Its function is as follows. Required for 2-O-methylation of the fucosyl group of Nod factors. The protein is 2-O-methyltransferase NoeI (noeI) of Sinorhizobium fredii (strain NBRC 101917 / NGR234).